The primary structure comprises 417 residues: Adenosylhomocysteinase (417 aa).

The substrate site is built by T53, D125, and E149. 150–152 (TTT) contributes to the NAD(+) binding site. Substrate contacts are provided by K179 and D183. NAD(+) contacts are provided by residues N184, 213 to 218 (GYGWVG), E236, N271, 292 to 294 (AGH), and N339.

Belongs to the adenosylhomocysteinase family. The cofactor is NAD(+).

It localises to the cytoplasm. The enzyme catalyses S-adenosyl-L-homocysteine + H2O = L-homocysteine + adenosine. It participates in amino-acid biosynthesis; L-homocysteine biosynthesis; L-homocysteine from S-adenosyl-L-homocysteine: step 1/1. May play a key role in the regulation of the intracellular concentration of adenosylhomocysteine. The chain is Adenosylhomocysteinase from Saccharolobus solfataricus (strain ATCC 35092 / DSM 1617 / JCM 11322 / P2) (Sulfolobus solfataricus).